Here is a 101-residue protein sequence, read N- to C-terminus: MQLPQKHHGTSSVLVLCCDKVAHCLITTFSLYITSQNAILKMPLEMKNNREKGPALLKHLISMQWHRDNQEYYSHRRYKVYIGHADPSRKYRRQVRYTQRT.

This is an uncharacterized protein from Saccharomyces cerevisiae (strain ATCC 204508 / S288c) (Baker's yeast).